The primary structure comprises 267 residues: Protein PERCC1 (267 aa).

3 disordered regions span residues 19 to 88 (HHPF…QLLR), 142 to 163 (SLEDEDTPEPRVPQGQVCRPGL), and 247 to 267 (ACPELPGRGTPALEGARPAEA). Residues 28–50 (EPPETSEEEEEEEEEEEEEEGEG) are compositionally biased toward acidic residues. Residues 74 to 83 (PEGPGSPETP) show a composition bias toward low complexity.

Functionally, plays a critical role in intestinal function. Acts by promoting the development of enteroendocrine cells (EECs) of the gastrointestinal tract and pancreas. It is thereby required for normal enteroendocrine peptide hormone secretion. This Homo sapiens (Human) protein is Protein PERCC1.